Reading from the N-terminus, the 352-residue chain is C-C chemokine receptor type 5 (352 aa).

Topologically, residues methionine 1 to alanine 30 are extracellular. Tyrosine 3 carries the post-translational modification Sulfotyrosine. Serine 6 and serine 7 each carry an O-linked (GalNAc...) serine glycan. Sulfotyrosine is present on residues tyrosine 10, tyrosine 14, and tyrosine 15. 2 disulfide bridges follow: cysteine 20/cysteine 269 and cysteine 101/cysteine 178. The helical transmembrane segment at arginine 31–cysteine 58 threads the bilayer. Topologically, residues lysine 59–tyrosine 68 are cytoplasmic. A helical transmembrane segment spans residues leucine 69–tyrosine 89. Over alanine 90 to glutamine 102 the chain is Extracellular. A helical transmembrane segment spans residues leucine 103–isoleucine 124. Residues aspartate 125–threonine 141 lie on the Cytoplasmic side of the membrane. Residues valine 142–phenylalanine 166 form a helical membrane-spanning segment. Residues threonine 167 to isoleucine 198 lie on the Extracellular side of the membrane. Residues valine 199–leucine 218 form a helical membrane-spanning segment. At lysine 219 to arginine 235 the chain is on the cytoplasmic side. The helical transmembrane segment at leucine 236–phenylalanine 260 threads the bilayer. The Extracellular segment spans residues glutamine 261–glutamine 277. The helical transmembrane segment at alanine 278–glycine 301 threads the bilayer. At glutamate 302–leucine 352 the chain is on the cytoplasmic side. Residues cysteine 321, cysteine 323, and cysteine 324 are each lipidated (S-palmitoyl cysteine). 4 positions are modified to phosphoserine; by BARK1: serine 336, serine 337, serine 342, and serine 349.

It belongs to the G-protein coupled receptor 1 family. Interacts with PRAF2. Efficient ligand binding to CCL3/MIP-1alpha and CCL4/MIP-1beta requires sulfation, O-glycosylation and sialic acid modifications. Glycosylation on Ser-6 is required for efficient binding of CCL4. Interacts with GRK2. Interacts with ARRB1 and ARRB2. Interacts with CNIH4. Interacts with S100A4; this interaction stimulates T-lymphocyte chemotaxis. Sulfated on at least 2 of the N-terminal tyrosines. Sulfation is required for efficient binding of the chemokines, CCL3 and CCL4. Post-translationally, palmitoylation in the C-terminal is important for cell surface expression. In terms of processing, phosphorylation on serine residues in the C-terminal is stimulated by binding CC chemokines especially by APO-RANTES. O-glycosylated, but not N-glycosylated. Ser-6 appears to be the major site even if Ser-7 may be also O-glycosylated. Also sialylated glycans present which contribute to chemokine binding. Thr-16 and Ser-17 may also be glycosylated and, if so, with small moieties such as a T-antigen.

Its subcellular location is the cell membrane. Its function is as follows. Receptor for a number of inflammatory CC-chemokines including CCL3/MIP-1-alpha, CCL4/MIP-1-beta and RANTES and subsequently transduces a signal by increasing the intracellular calcium ion level. May play a role in the control of granulocytic lineage proliferation or differentiation. Participates in T-lymphocyte migration to the infection site by acting as a chemotactic receptor. This is C-C chemokine receptor type 5 (CCR5) from Erythrocebus patas (Red guenon).